The following is a 107-amino-acid chain: Integration host factor subunit beta (107 aa).

The segment at 55 to 107 (RRPARVGRNPKSGEKVQVPEKHVPHFKPGKELRERVDGRAGEPLKNDEPEDAQ) is disordered. Basic and acidic residues predominate over residues 65 to 101 (KSGEKVQVPEKHVPHFKPGKELRERVDGRAGEPLKND).

This sequence belongs to the bacterial histone-like protein family. In terms of assembly, heterodimer of an alpha and a beta chain.

Functionally, this protein is one of the two subunits of integration host factor, a specific DNA-binding protein that functions in genetic recombination as well as in transcriptional and translational control. The protein is Integration host factor subunit beta of Burkholderia pseudomallei (strain K96243).